The chain runs to 278 residues: HTH-type transcriptional activator RhaS (278 aa).

An HTH araC/xylS-type domain is found at 174–272 (NQLLAWLEDH…DWSPRDIRQG (99 aa)). 2 DNA-binding regions (H-T-H motif) span residues 191 to 212 (EEVA…KQQT) and 239 to 262 (VTDI…RREF).

As to quaternary structure, binds DNA as a dimer.

It is found in the cytoplasm. In terms of biological role, activates expression of the rhaBAD and rhaT operons. The polypeptide is HTH-type transcriptional activator RhaS (Klebsiella pneumoniae (strain 342)).